The following is a 387-amino-acid chain: Succinate--CoA ligase [ADP-forming] subunit beta (387 aa).

The 237-residue stretch at 9 to 245 (KDLLESYGLK…KSQENAKELK (237 aa)) folds into the ATP-grasp domain. Residues Lys-46, 53–55 (GRG), Glu-100, Tyr-103, and Glu-108 each bind ATP. Mg(2+) is bound by residues Asn-200 and Asp-214. Residues Asn-265 and 322 to 324 (GIV) contribute to the substrate site.

This sequence belongs to the succinate/malate CoA ligase beta subunit family. In terms of assembly, heterotetramer of two alpha and two beta subunits. Requires Mg(2+) as cofactor.

It carries out the reaction succinate + ATP + CoA = succinyl-CoA + ADP + phosphate. The enzyme catalyses GTP + succinate + CoA = succinyl-CoA + GDP + phosphate. It participates in carbohydrate metabolism; tricarboxylic acid cycle; succinate from succinyl-CoA (ligase route): step 1/1. Its function is as follows. Succinyl-CoA synthetase functions in the citric acid cycle (TCA), coupling the hydrolysis of succinyl-CoA to the synthesis of either ATP or GTP and thus represents the only step of substrate-level phosphorylation in the TCA. The beta subunit provides nucleotide specificity of the enzyme and binds the substrate succinate, while the binding sites for coenzyme A and phosphate are found in the alpha subunit. In Francisella tularensis subsp. holarctica (strain FTNF002-00 / FTA), this protein is Succinate--CoA ligase [ADP-forming] subunit beta.